The chain runs to 178 residues: Endothelin-2 (178 aa).

The signal sequence occupies residues 1 to 26 (MVAMPTAWCSIALALLLALHEGKGQV). A propeptide spanning residues 27 to 46 (AAAPDQPAPSHRARASHLRP) is cleaved from the precursor. 2 cysteine pairs are disulfide-bonded: cysteine 49–cysteine 63 and cysteine 51–cysteine 59. Residues 70-178 (VNTPGQTAPY…RPTHSRRWKR (109 aa)) constitute a propeptide that is removed on maturation. An endothelin-like region spans residues 96-111 (CECSSGRDPACATFCH).

This sequence belongs to the endothelin/sarafotoxin family.

It localises to the secreted. Endothelins are endothelium-derived vasoconstrictor peptides. This Felis catus (Cat) protein is Endothelin-2 (EDN2).